The chain runs to 476 residues: ATP synthase subunit beta, chloroplastic (476 aa).

ATP is bound at residue 155–162 (GGAGVGKT).

The protein belongs to the ATPase alpha/beta chains family. In terms of assembly, F-type ATPases have 2 components, CF(1) - the catalytic core - and CF(0) - the membrane proton channel. CF(1) has five subunits: alpha(3), beta(3), gamma(1), delta(1), epsilon(1). CF(0) has four main subunits: a(1), b(1), b'(1) and c(9-12).

It localises to the plastid. The protein resides in the chloroplast thylakoid membrane. It carries out the reaction ATP + H2O + 4 H(+)(in) = ADP + phosphate + 5 H(+)(out). Produces ATP from ADP in the presence of a proton gradient across the membrane. The catalytic sites are hosted primarily by the beta subunits. This chain is ATP synthase subunit beta, chloroplastic, found in Emiliania huxleyi (Coccolithophore).